We begin with the raw amino-acid sequence, 432 residues long: Benzoyl-CoA reductase subunit B (432 aa).

The protein belongs to the FldB/FldC dehydratase alpha/beta subunit family. Heterotetramer composed of A, B, C, and D subunits. It depends on iron-sulfur cluster as a cofactor. Requires an oxidized flavin as cofactor.

The catalysed reaction is cyclohexa-1,5-diene-1-carbonyl-CoA + oxidized 2[4Fe-4S]-[ferredoxin] + 2 ADP + 2 phosphate = reduced 2[4Fe-4S]-[ferredoxin] + benzoyl-CoA + 2 ATP + 2 H2O. It carries out the reaction 3-hydroxybenzoyl-CoA + AH2 + 2 ATP + 2 H2O = 3-hydroxycyclohexa-1,5-diene-1-carbonyl-CoA + A + 2 ADP + 2 phosphate + 2 H(+). In terms of biological role, catalyzes the anaerobic reduction of benzoyl-CoA and 3-hydroxybenzoyl-CoA to form cyclohexa-1,5-diene-1-carbonyl-CoA and 3-hydroxycyclohexa-1,5-diene-1-carbonyl-CoA, respectively. The enzyme also reduces other benzoyl-CoA analogs with small substituents at the aromatic ring. The sequence is that of Benzoyl-CoA reductase subunit B (bcrB) from Thauera aromatica.